The sequence spans 440 residues: Thymidine phosphorylase (440 aa).

Belongs to the thymidine/pyrimidine-nucleoside phosphorylase family. Homodimer.

The catalysed reaction is thymidine + phosphate = 2-deoxy-alpha-D-ribose 1-phosphate + thymine. Its pathway is pyrimidine metabolism; dTMP biosynthesis via salvage pathway; dTMP from thymine: step 1/2. Functionally, the enzymes which catalyze the reversible phosphorolysis of pyrimidine nucleosides are involved in the degradation of these compounds and in their utilization as carbon and energy sources, or in the rescue of pyrimidine bases for nucleotide synthesis. The sequence is that of Thymidine phosphorylase from Rhizobium meliloti (strain 1021) (Ensifer meliloti).